A 384-amino-acid polypeptide reads, in one-letter code: Branched-chain-amino-acid aminotransferase 1, mitochondrial (384 aa).

The transit peptide at 1 to 18 (MALRRCLPQYSTTSSYLS) directs the protein to the mitochondrion. An N6-(pyridoxal phosphate)lysine modification is found at K231.

The protein belongs to the class-IV pyridoxal-phosphate-dependent aminotransferase family. Pyridoxal 5'-phosphate serves as cofactor.

It localises to the mitochondrion. It carries out the reaction L-leucine + 2-oxoglutarate = 4-methyl-2-oxopentanoate + L-glutamate. It catalyses the reaction L-isoleucine + 2-oxoglutarate = (S)-3-methyl-2-oxopentanoate + L-glutamate. The enzyme catalyses L-valine + 2-oxoglutarate = 3-methyl-2-oxobutanoate + L-glutamate. It participates in amino-acid degradation; L-leucine degradation; 4-methyl-2-oxopentanoate from L-leucine (aminotransferase route): step 1/1. It functions in the pathway amino-acid degradation; L-valine degradation. Its function is as follows. Converts 2-oxo acids to branched-chain amino acids. Acts on leucine, isoleucine and valine. This is Branched-chain-amino-acid aminotransferase 1, mitochondrial (BCAT1) from Arabidopsis thaliana (Mouse-ear cress).